Reading from the N-terminus, the 429-residue chain is UPF0597 protein GSU1527 (429 aa).

The protein belongs to the UPF0597 family.

The polypeptide is UPF0597 protein GSU1527 (Geobacter sulfurreducens (strain ATCC 51573 / DSM 12127 / PCA)).